A 1078-amino-acid chain; its full sequence is Transmembrane protein 132B (1078 aa).

The Extracellular portion of the chain corresponds to 1-903 (MFGAASRMDT…LTDLEIGMYA (903 aa)). N-linked (GlcNAc...) asparagine glycosylation is found at Asn343, Asn366, and Asn381. The disordered stretch occupies residues 834–887 (RGTPVGQEESTNKSTTPQSPMEGKNKLLKSGGPDAFTSFPTQGKSPDPNNPSDL). Polar residues predominate over residues 841–852 (EESTNKSTTPQS). A helical transmembrane segment spans residues 904-924 (LLCVFCLAILVFLINCVAFAW). Residues 925–1078 (KYRHKRFAVS…DYMESLQDQM (154 aa)) lie on the Cytoplasmic side of the membrane.

Belongs to the TMEM132 family.

Its subcellular location is the membrane. This is Transmembrane protein 132B (TMEM132B) from Homo sapiens (Human).